Consider the following 215-residue polypeptide: Deoxyribose-phosphate aldolase (215 aa).

The Proton donor/acceptor role is filled by Asp90. Lys152 acts as the Schiff-base intermediate with acetaldehyde in catalysis. The Proton donor/acceptor role is filled by Lys181.

The protein belongs to the DeoC/FbaB aldolase family. DeoC type 1 subfamily.

It localises to the cytoplasm. It catalyses the reaction 2-deoxy-D-ribose 5-phosphate = D-glyceraldehyde 3-phosphate + acetaldehyde. Its pathway is carbohydrate degradation; 2-deoxy-D-ribose 1-phosphate degradation; D-glyceraldehyde 3-phosphate and acetaldehyde from 2-deoxy-alpha-D-ribose 1-phosphate: step 2/2. In terms of biological role, catalyzes a reversible aldol reaction between acetaldehyde and D-glyceraldehyde 3-phosphate to generate 2-deoxy-D-ribose 5-phosphate. This is Deoxyribose-phosphate aldolase from Ureaplasma urealyticum serovar 10 (strain ATCC 33699 / Western).